Consider the following 450-residue polypeptide: MRRMRFSPRSSFARTLLLIVTLLFVSLVTTYLVVLNFAILPSLQQFNKVLAYEVRMLMTDKLQLEDGTQLVVPPAFRREIYRELGISLYTNEAAEEAGLRWAQHYEFLSHQMAQQLGGPTEVRVEVNKSSPVVWLKTWLSPNIWVRVPLTEIHQGDFSPLFRYTLAIMLLAIGGAWLFIRIQNRPLVDLEHAALQVGKGIIPPPLREYGASEVRSVTRAFNHMAAGVKQLADDRTLLMAGVSHDLRTPLTRIRLATEMMGEEDGYLAESINKDIEECNAIIEQFIDYLRTGQEMPMEMADLNSVLGEVIAAESGYEREINTALQAGSIQVKMHPLSIKRAVANMVVNAARYGNCWIKVSSGTESHRAWFQVEDDGPGIKPEQRKHLFQPFVRGDSARSTSGTGLGLAIVQRIIDNHNGMLEIGTSERGGLSIRAWLPVPVARVQGTTKEA.

Residues 1–15 (MRRMRFSPRSSFART) lie on the Cytoplasmic side of the membrane. The helical transmembrane segment at 16 to 35 (LLLIVTLLFVSLVTTYLVVL) threads the bilayer. The Periplasmic segment spans residues 36 to 158 (NFAILPSLQQ…LTEIHQGDFS (123 aa)). The chain crosses the membrane as a helical span at residues 159–179 (PLFRYTLAIMLLAIGGAWLFI). The 53-residue stretch at 180 to 232 (RIQNRPLVDLEHAALQVGKGIIPPPLREYGASEVRSVTRAFNHMAAGVKQLAD) folds into the HAMP domain. The Cytoplasmic portion of the chain corresponds to 180–450 (RIQNRPLVDL…ARVQGTTKEA (271 aa)). A cytoplasmic dimerization domain (CDD), when dimerized forms osmosensitive core region spans residues 223–289 (MAAGVKQLAD…IIEQFIDYLR (67 aa)). A Histidine kinase domain is found at 240–440 (GVSHDLRTPL…SIRAWLPVPV (201 aa)). Residues histidine 243, 347–351 (NAARY), aspartate 373, 392–393 (RG), and 402–406 (TGLGL) each bind ATP. Position 243 is a phosphohistidine; by autocatalysis (histidine 243).

Homodimer. Post-translationally, autophosphorylated.

The protein resides in the cell inner membrane. It carries out the reaction ATP + protein L-histidine = ADP + protein N-phospho-L-histidine.. Its function is as follows. Member of the two-component regulatory system EnvZ/OmpR involved in regulating expression of the outer membrane porins OmpC and OmpF as well as other genes. Unlike E.coli or S.typhimurium both porins are expressed constitutively. Involved in regulation of the biosynthesis of Vi polysaccharide, a capsular antigen thought to be involved in the virulence of S.typhi. Vi antigen is synthesized at low NaCl concentrations (under 0.4 M). EnvZ functions as a membrane-associated protein kinase that phosphorylates OmpR in response to environmental signals. This chain is Sensor histidine kinase EnvZ (envZ), found in Salmonella typhi.